A 218-amino-acid chain; its full sequence is Probable transaldolase (218 aa).

K83 acts as the Schiff-base intermediate with substrate in catalysis.

It belongs to the transaldolase family. Type 3B subfamily.

The protein localises to the cytoplasm. The catalysed reaction is D-sedoheptulose 7-phosphate + D-glyceraldehyde 3-phosphate = D-erythrose 4-phosphate + beta-D-fructose 6-phosphate. The protein operates within carbohydrate degradation; pentose phosphate pathway; D-glyceraldehyde 3-phosphate and beta-D-fructose 6-phosphate from D-ribose 5-phosphate and D-xylulose 5-phosphate (non-oxidative stage): step 2/3. Transaldolase is important for the balance of metabolites in the pentose-phosphate pathway. This is Probable transaldolase from Parvibaculum lavamentivorans (strain DS-1 / DSM 13023 / NCIMB 13966).